Reading from the N-terminus, the 424-residue chain is Riboflavin biosynthesis protein RibBA (424 aa).

Residues 1-206 are DHBP synthase; that stretch reads MFTCEAGIAS…VDDLITYRYT (206 aa). D-ribulose 5-phosphate-binding positions include 32 to 33, Asp-37, 145 to 149, and Glu-169; these read RE and RPGHT. Glu-33 provides a ligand contact to Mg(2+). Residue His-148 participates in Mg(2+) binding. Residues 207-424 are GTP cyclohydrolase II; sequence YDSLVTKISS…YETVERMSCR (218 aa). Position 257–261 (257–261) interacts with GTP; sequence RVHSE. Zn(2+)-binding residues include Cys-262, Cys-273, and Cys-275. Residues Gln-278, 301–303, and Thr-323 contribute to the GTP site; that span reads EGR. Asp-335 acts as the Proton acceptor; for GTP cyclohydrolase activity in catalysis. The active-site Nucleophile; for GTP cyclohydrolase activity is Arg-337. Thr-358 and Lys-363 together coordinate GTP.

It in the N-terminal section; belongs to the DHBP synthase family. In the C-terminal section; belongs to the GTP cyclohydrolase II family. The cofactor is Mg(2+). Mn(2+) serves as cofactor. It depends on Zn(2+) as a cofactor.

The catalysed reaction is D-ribulose 5-phosphate = (2S)-2-hydroxy-3-oxobutyl phosphate + formate + H(+). The enzyme catalyses GTP + 4 H2O = 2,5-diamino-6-hydroxy-4-(5-phosphoribosylamino)-pyrimidine + formate + 2 phosphate + 3 H(+). Its pathway is cofactor biosynthesis; riboflavin biosynthesis; 2-hydroxy-3-oxobutyl phosphate from D-ribulose 5-phosphate: step 1/1. It functions in the pathway cofactor biosynthesis; riboflavin biosynthesis; 5-amino-6-(D-ribitylamino)uracil from GTP: step 1/4. In terms of biological role, catalyzes the conversion of D-ribulose 5-phosphate to formate and 3,4-dihydroxy-2-butanone 4-phosphate. Functionally, catalyzes the conversion of GTP to 2,5-diamino-6-ribosylamino-4(3H)-pyrimidinone 5'-phosphate (DARP), formate and pyrophosphate. The sequence is that of Riboflavin biosynthesis protein RibBA from Chlamydia trachomatis serovar D (strain ATCC VR-885 / DSM 19411 / UW-3/Cx).